A 426-amino-acid chain; its full sequence is Glutamate-1-semialdehyde 2,1-aminomutase (426 aa).

Position 265 is an N6-(pyridoxal phosphate)lysine (Lys-265).

It belongs to the class-III pyridoxal-phosphate-dependent aminotransferase family. HemL subfamily. Homodimer. It depends on pyridoxal 5'-phosphate as a cofactor.

It is found in the cytoplasm. The enzyme catalyses (S)-4-amino-5-oxopentanoate = 5-aminolevulinate. It participates in porphyrin-containing compound metabolism; protoporphyrin-IX biosynthesis; 5-aminolevulinate from L-glutamyl-tRNA(Glu): step 2/2. This is Glutamate-1-semialdehyde 2,1-aminomutase from Escherichia coli (strain SMS-3-5 / SECEC).